Here is an 89-residue protein sequence, read N- to C-terminus: Venom peptide BmKAPI (89 aa).

Residues 1-22 (MKFVFASFALFVIFLCFSQSLS) form the signal peptide. Disulfide bonds link cysteine 28-cysteine 66, cysteine 37-cysteine 62, cysteine 41-cysteine 55, cysteine 46-cysteine 86, and cysteine 68-cysteine 80. The TIL domain occupies 28-86 (CRDNEVFDNCISNCGPPRCSNILNTYPCTNLGPLCTPGCKCKDGRVYDNQGRCVLQTEC).

This sequence belongs to the serine protease inhibitor-like (TIL domain-containing) family. In terms of tissue distribution, expressed by the venom gland.

The protein resides in the secreted. Serine protease inhibitor. This is Venom peptide BmKAPI from Olivierus martensii (Manchurian scorpion).